The primary structure comprises 386 residues: Bifunctional enzyme IspD/IspF (386 aa).

The tract at residues 1–231 (MKNGAVIIPA…REKKEPMQKI (231 aa)) is 2-C-methyl-D-erythritol 4-phosphate cytidylyltransferase. A 2-C-methyl-D-erythritol 2,4-cyclodiphosphate synthase region spans residues 232–386 (RIGHGFDAHQ…SCHAVVLLQQ (155 aa)). A divalent metal cation is bound by residues Asp-238 and His-240. 4-CDP-2-C-methyl-D-erythritol 2-phosphate is bound by residues 238–240 (DAH) and 264–265 (HS). Position 272 (His-272) interacts with a divalent metal cation. 4-CDP-2-C-methyl-D-erythritol 2-phosphate-binding positions include 286 to 288 (DIG), 362 to 365 (TTTE), Tyr-369, and Arg-372.

This sequence in the N-terminal section; belongs to the IspD/TarI cytidylyltransferase family. IspD subfamily. The protein in the C-terminal section; belongs to the IspF family. A divalent metal cation is required as a cofactor.

It catalyses the reaction 2-C-methyl-D-erythritol 4-phosphate + CTP + H(+) = 4-CDP-2-C-methyl-D-erythritol + diphosphate. The catalysed reaction is 4-CDP-2-C-methyl-D-erythritol 2-phosphate = 2-C-methyl-D-erythritol 2,4-cyclic diphosphate + CMP. It participates in isoprenoid biosynthesis; isopentenyl diphosphate biosynthesis via DXP pathway; isopentenyl diphosphate from 1-deoxy-D-xylulose 5-phosphate: step 2/6. The protein operates within isoprenoid biosynthesis; isopentenyl diphosphate biosynthesis via DXP pathway; isopentenyl diphosphate from 1-deoxy-D-xylulose 5-phosphate: step 4/6. Functionally, bifunctional enzyme that catalyzes the formation of 4-diphosphocytidyl-2-C-methyl-D-erythritol from CTP and 2-C-methyl-D-erythritol 4-phosphate (MEP) (IspD), and catalyzes the conversion of 4-diphosphocytidyl-2-C-methyl-D-erythritol 2-phosphate (CDP-ME2P) to 2-C-methyl-D-erythritol 2,4-cyclodiphosphate (ME-CPP) with a corresponding release of cytidine 5-monophosphate (CMP) (IspF). This is Bifunctional enzyme IspD/IspF from Desulfotalea psychrophila (strain LSv54 / DSM 12343).